Reading from the N-terminus, the 157-residue chain is DNA gyrase inhibitor (157 aa).

It belongs to the DNA gyrase inhibitor family. In terms of assembly, interacts with DNA gyrase.

Its subcellular location is the cytoplasm. In terms of biological role, inhibits the supercoiling activity of DNA gyrase. Acts by inhibiting DNA gyrase at an early step, prior to (or at the step of) binding of DNA by the gyrase. It protects cells against toxins that target DNA gyrase, by inhibiting activity of these toxins and reducing the formation of lethal double-strand breaks in the cell. In Cronobacter turicensis (strain DSM 18703 / CCUG 55852 / LMG 23827 / z3032), this protein is DNA gyrase inhibitor.